We begin with the raw amino-acid sequence, 1127 residues long: Major DNA-binding protein (1127 aa).

Residues 1098–1127 are required for nuclear localization; sequence QVKLTSMDHSGKVVGGKKRKIATMFDDLDL.

It belongs to the herpesviridae major DNA-binding protein family. As to quaternary structure, homooligomers. Forms double-helical filaments necessary for the formation of replication compartments within the host nucleus. Interacts with the origin-binding protein. Interacts with the helicase primase complex; this interaction stimulates primer synthesis activity of the helicase-primase complex. Interacts with the DNA polymerase. Interacts with the alkaline exonuclease; this interaction increases its nuclease processivity.

Its subcellular location is the host nucleus. Plays several crucial roles in viral infection. Participates in the opening of the viral DNA origin to initiate replication by interacting with the origin-binding protein. May disrupt loops, hairpins and other secondary structures present on ssDNA to reduce and eliminate pausing of viral DNA polymerase at specific sites during elongation. Promotes viral DNA recombination by performing strand-transfer, characterized by the ability to transfer a DNA strand from a linear duplex to a complementary single-stranded DNA circle. Can also catalyze the renaturation of complementary single strands. Additionally, reorganizes the host cell nucleus, leading to the formation of prereplicative sites and replication compartments. This process is driven by the protein which can form double-helical filaments in the absence of DNA. The polypeptide is Major DNA-binding protein (Alcelaphine herpesvirus 1 (strain C500) (AlHV-1)).